A 259-amino-acid polypeptide reads, in one-letter code: DNA-directed RNA polymerase subunit Rpo3 (259 aa).

It belongs to the archaeal Rpo3/eukaryotic RPB3 RNA polymerase subunit family. As to quaternary structure, part of the RNA polymerase complex.

It localises to the cytoplasm. It catalyses the reaction RNA(n) + a ribonucleoside 5'-triphosphate = RNA(n+1) + diphosphate. DNA-dependent RNA polymerase (RNAP) catalyzes the transcription of DNA into RNA using the four ribonucleoside triphosphates as substrates. This is DNA-directed RNA polymerase subunit Rpo3 from Pyrobaculum arsenaticum (strain DSM 13514 / JCM 11321 / PZ6).